The sequence spans 869 residues: Nitrogen permease regulator 3 (869 aa).

Residues 1-23 (MSSIARPPDPCLVAIILIVRSRA) form the signal peptide. Disordered stretches follow at residues 31-180 (YPPN…RPPW), 228-275 (WRKQ…PDRG), 662-702 (KRGS…GRYK), and 842-869 (KTISPNPASSHVMTPRHTDGRNGTTPTN). Residues 45–55 (PKARRPSRKNS) are compositionally biased toward basic residues. 2 stretches are compositionally biased toward low complexity: residues 57 to 70 (SNESSSSEDSSSTS) and 80 to 102 (TATAAAPATTGTATQPANATQNA). Positions 115 to 129 (RSSNFGVVDDTTISG) are enriched in polar residues. Positions 229–239 (RKQRRKKRKPR) are enriched in basic residues. A compositionally biased stretch (acidic residues) spans 254–271 (GDGDGDGEGDEAGTEDDS). A compositionally biased stretch (low complexity) spans 679 to 692 (SSSSSSSLGSNGSG). A compositionally biased stretch (polar residues) spans 842–853 (KTISPNPASSHV).

This sequence belongs to the NPR3 family.

Its function is as follows. Mediates inactivation of the TORC1 complex in response to amino acid starvation. Required for meiotic nuclear division. The protein is Nitrogen permease regulator 3 (npr3) of Aspergillus niger (strain ATCC MYA-4892 / CBS 513.88 / FGSC A1513).